A 183-amino-acid polypeptide reads, in one-letter code: Dual-action ribosomal maturation protein DarP (183 aa).

The interval 1-20 (MKQKYEDWLNDVPDNQEDDE) is disordered.

This sequence belongs to the DarP family.

The protein resides in the cytoplasm. In terms of biological role, member of a network of 50S ribosomal subunit biogenesis factors which assembles along the 30S-50S interface, preventing incorrect 23S rRNA structures from forming. Promotes peptidyl transferase center (PTC) maturation. In Pectobacterium carotovorum subsp. carotovorum (strain PC1), this protein is Dual-action ribosomal maturation protein DarP.